Here is a 663-residue protein sequence, read N- to C-terminus: UvrABC system protein B (663 aa).

The span at 1 to 10 (MIDKRDDKPF) shows a compositional bias: basic and acidic residues. Residues 1–23 (MIDKRDDKPFKLKSKYKPSGDQP) are disordered. In terms of domain architecture, Helicase ATP-binding spans 31-418 (DNIEGGEKAQ…TNTIIEQIIR (388 aa)). 44 to 51 (GATGTGKT) serves as a coordination point for ATP. A Beta-hairpin motif is present at residues 97–120 (YYDYYQPEAYVPSSDTYIEKDSSV). Residues 435–601 (QMDDLLGEIN…TIKKDIRGLI (167 aa)) enclose the Helicase C-terminal domain. Residues 627 to 662 (KEAINALQKQMQEAAELLDFELAAQMRDLILELKLM) form the UVR domain.

The protein belongs to the UvrB family. As to quaternary structure, forms a heterotetramer with UvrA during the search for lesions. Interacts with UvrC in an incision complex.

The protein resides in the cytoplasm. Functionally, the UvrABC repair system catalyzes the recognition and processing of DNA lesions. A damage recognition complex composed of 2 UvrA and 2 UvrB subunits scans DNA for abnormalities. Upon binding of the UvrA(2)B(2) complex to a putative damaged site, the DNA wraps around one UvrB monomer. DNA wrap is dependent on ATP binding by UvrB and probably causes local melting of the DNA helix, facilitating insertion of UvrB beta-hairpin between the DNA strands. Then UvrB probes one DNA strand for the presence of a lesion. If a lesion is found the UvrA subunits dissociate and the UvrB-DNA preincision complex is formed. This complex is subsequently bound by UvrC and the second UvrB is released. If no lesion is found, the DNA wraps around the other UvrB subunit that will check the other stand for damage. This chain is UvrABC system protein B, found in Streptococcus pyogenes serotype M6 (strain ATCC BAA-946 / MGAS10394).